The chain runs to 336 residues: Holliday junction branch migration complex subunit RuvB (336 aa).

A large ATPase domain (RuvB-L) region spans residues 1–175; sequence MEKYSFESVQ…FGMSFRLQFY (175 aa). Residues Leu-14, Arg-15, Gly-56, Lys-59, Thr-60, Thr-61, 122-124, Arg-165, Tyr-175, and Arg-212 each bind ATP; that span reads EDF. Thr-60 serves as a coordination point for Mg(2+). Residues 176 to 253 are small ATPAse domain (RuvB-S); that stretch reads EPKELSAIVI…CVRYALNELG (78 aa). The tract at residues 256–336 is head domain (RuvB-H); it reads ELGFDELDLR…IPFLEQKGLF (81 aa). 2 residues coordinate DNA: Arg-310 and Arg-315.

The protein belongs to the RuvB family. In terms of assembly, homohexamer. Forms an RuvA(8)-RuvB(12)-Holliday junction (HJ) complex. HJ DNA is sandwiched between 2 RuvA tetramers; dsDNA enters through RuvA and exits via RuvB. An RuvB hexamer assembles on each DNA strand where it exits the tetramer. Each RuvB hexamer is contacted by two RuvA subunits (via domain III) on 2 adjacent RuvB subunits; this complex drives branch migration. In the full resolvosome a probable DNA-RuvA(4)-RuvB(12)-RuvC(2) complex forms which resolves the HJ.

It is found in the cytoplasm. The catalysed reaction is ATP + H2O = ADP + phosphate + H(+). In terms of biological role, the RuvA-RuvB-RuvC complex processes Holliday junction (HJ) DNA during genetic recombination and DNA repair, while the RuvA-RuvB complex plays an important role in the rescue of blocked DNA replication forks via replication fork reversal (RFR). RuvA specifically binds to HJ cruciform DNA, conferring on it an open structure. The RuvB hexamer acts as an ATP-dependent pump, pulling dsDNA into and through the RuvAB complex. RuvB forms 2 homohexamers on either side of HJ DNA bound by 1 or 2 RuvA tetramers; 4 subunits per hexamer contact DNA at a time. Coordinated motions by a converter formed by DNA-disengaged RuvB subunits stimulates ATP hydrolysis and nucleotide exchange. Immobilization of the converter enables RuvB to convert the ATP-contained energy into a lever motion, pulling 2 nucleotides of DNA out of the RuvA tetramer per ATP hydrolyzed, thus driving DNA branch migration. The RuvB motors rotate together with the DNA substrate, which together with the progressing nucleotide cycle form the mechanistic basis for DNA recombination by continuous HJ branch migration. Branch migration allows RuvC to scan DNA until it finds its consensus sequence, where it cleaves and resolves cruciform DNA. In Helicobacter hepaticus (strain ATCC 51449 / 3B1), this protein is Holliday junction branch migration complex subunit RuvB.